The chain runs to 545 residues: Hydroxylamine reductase (545 aa).

Cysteine 3, cysteine 6, cysteine 15, and cysteine 21 together coordinate [4Fe-4S] cluster. Histidine 241, glutamate 265, cysteine 309, cysteine 396, cysteine 424, cysteine 449, glutamate 483, and lysine 485 together coordinate hybrid [4Fe-2O-2S] cluster. Position 396 is a cysteine persulfide (cysteine 396).

This sequence belongs to the HCP family. Requires [4Fe-4S] cluster as cofactor. The cofactor is hybrid [4Fe-2O-2S] cluster.

The protein localises to the cytoplasm. It catalyses the reaction A + NH4(+) + H2O = hydroxylamine + AH2 + H(+). Catalyzes the reduction of hydroxylamine to form NH(3) and H(2)O. This chain is Hydroxylamine reductase, found in Zymomonas mobilis subsp. mobilis (strain ATCC 31821 / ZM4 / CP4).